Here is a 141-residue protein sequence, read N- to C-terminus: Large ribosomal subunit protein uL11 (141 aa).

It belongs to the universal ribosomal protein uL11 family. In terms of assembly, part of the ribosomal stalk of the 50S ribosomal subunit. Interacts with L10 and the large rRNA to form the base of the stalk. L10 forms an elongated spine to which L12 dimers bind in a sequential fashion forming a multimeric L10(L12)X complex. In terms of processing, one or more lysine residues are methylated.

In terms of biological role, forms part of the ribosomal stalk which helps the ribosome interact with GTP-bound translation factors. This is Large ribosomal subunit protein uL11 from Dinoroseobacter shibae (strain DSM 16493 / NCIMB 14021 / DFL 12).